The sequence spans 96 residues: Ubiquitin-like protein NEDD8-like protein 1 (96 aa).

The disordered stretch occupies residues 75–96 (SQSDNSEKSEKSGKSEKDCILM). Residues 79–96 (NSEKSEKSGKSEKDCILM) are compositionally biased toward basic and acidic residues.

Belongs to the ubiquitin family.

The sequence is that of Ubiquitin-like protein NEDD8-like protein 1 (nedd8l1) from Dictyostelium discoideum (Social amoeba).